The chain runs to 470 residues: Cysteine--tRNA ligase (470 aa).

C27 is a Zn(2+) binding site. The 'HIGH' region signature appears at 29-39 (PTVYNHIHIGN). Residues C207, H232, and E236 each contribute to the Zn(2+) site. A 'KMSKS' region motif is present at residues 265 to 269 (KMAKS). K268 contributes to the ATP binding site.

The protein belongs to the class-I aminoacyl-tRNA synthetase family. As to quaternary structure, monomer. It depends on Zn(2+) as a cofactor.

The protein localises to the cytoplasm. The catalysed reaction is tRNA(Cys) + L-cysteine + ATP = L-cysteinyl-tRNA(Cys) + AMP + diphosphate. The chain is Cysteine--tRNA ligase from Rubrobacter xylanophilus (strain DSM 9941 / JCM 11954 / NBRC 16129 / PRD-1).